We begin with the raw amino-acid sequence, 171 residues long: Xanthine-guanine phosphoribosyltransferase (171 aa).

5-phospho-alpha-D-ribose 1-diphosphate contacts are provided by residues 51-52 (RG) and 106-114 (DDLVDSGKT). Asp107 lines the Mg(2+) pocket. Asp110 and Ile153 together coordinate guanine. Asp110 and Ile153 together coordinate xanthine. Residues 110 to 114 (DSGKT) and 152 to 153 (WI) contribute to the GMP site.

This sequence belongs to the purine/pyrimidine phosphoribosyltransferase family. XGPT subfamily. Homotetramer. It depends on Mg(2+) as a cofactor.

It localises to the cell inner membrane. It carries out the reaction GMP + diphosphate = guanine + 5-phospho-alpha-D-ribose 1-diphosphate. The catalysed reaction is XMP + diphosphate = xanthine + 5-phospho-alpha-D-ribose 1-diphosphate. The enzyme catalyses IMP + diphosphate = hypoxanthine + 5-phospho-alpha-D-ribose 1-diphosphate. The protein operates within purine metabolism; GMP biosynthesis via salvage pathway; GMP from guanine: step 1/1. Its pathway is purine metabolism; XMP biosynthesis via salvage pathway; XMP from xanthine: step 1/1. Purine salvage pathway enzyme that catalyzes the transfer of the ribosyl-5-phosphate group from 5-phospho-alpha-D-ribose 1-diphosphate (PRPP) to the N9 position of the 6-oxopurines guanine and xanthine to form the corresponding ribonucleotides GMP (guanosine 5'-monophosphate) and XMP (xanthosine 5'-monophosphate), with the release of PPi. To a lesser extent, also acts on hypoxanthine. This chain is Xanthine-guanine phosphoribosyltransferase, found in Ruegeria pomeroyi (strain ATCC 700808 / DSM 15171 / DSS-3) (Silicibacter pomeroyi).